A 239-amino-acid polypeptide reads, in one-letter code: Pyridoxine 5'-phosphate synthase (239 aa).

Residue Asn-7 coordinates 3-amino-2-oxopropyl phosphate. Residue 9–10 (DH) participates in 1-deoxy-D-xylulose 5-phosphate binding. A 3-amino-2-oxopropyl phosphate-binding site is contributed by Arg-18. The Proton acceptor role is filled by His-43. Residues Arg-45 and His-50 each coordinate 1-deoxy-D-xylulose 5-phosphate. Glu-70 acts as the Proton acceptor in catalysis. Residue Thr-100 coordinates 1-deoxy-D-xylulose 5-phosphate. The Proton donor role is filled by His-191. Residues Gly-192 and 213–214 (GH) each bind 3-amino-2-oxopropyl phosphate.

Belongs to the PNP synthase family. As to quaternary structure, homooctamer; tetramer of dimers.

Its subcellular location is the cytoplasm. The catalysed reaction is 3-amino-2-oxopropyl phosphate + 1-deoxy-D-xylulose 5-phosphate = pyridoxine 5'-phosphate + phosphate + 2 H2O + H(+). It functions in the pathway cofactor biosynthesis; pyridoxine 5'-phosphate biosynthesis; pyridoxine 5'-phosphate from D-erythrose 4-phosphate: step 5/5. In terms of biological role, catalyzes the complicated ring closure reaction between the two acyclic compounds 1-deoxy-D-xylulose-5-phosphate (DXP) and 3-amino-2-oxopropyl phosphate (1-amino-acetone-3-phosphate or AAP) to form pyridoxine 5'-phosphate (PNP) and inorganic phosphate. In Trichormus variabilis (strain ATCC 29413 / PCC 7937) (Anabaena variabilis), this protein is Pyridoxine 5'-phosphate synthase.